Here is a 175-residue protein sequence, read N- to C-terminus: Peptide deformylase (175 aa).

2 residues coordinate Fe cation: Cys98 and His140. Glu141 is an active-site residue. A Fe cation-binding site is contributed by His144.

This sequence belongs to the polypeptide deformylase family. It depends on Fe(2+) as a cofactor.

It carries out the reaction N-terminal N-formyl-L-methionyl-[peptide] + H2O = N-terminal L-methionyl-[peptide] + formate. In terms of biological role, removes the formyl group from the N-terminal Met of newly synthesized proteins. Requires at least a dipeptide for an efficient rate of reaction. N-terminal L-methionine is a prerequisite for activity but the enzyme has broad specificity at other positions. This chain is Peptide deformylase, found in Bradyrhizobium sp. (strain BTAi1 / ATCC BAA-1182).